The following is a 72-amino-acid chain: Large ribosomal subunit protein bL31 (72 aa).

Zn(2+) is bound by residues cysteine 16, cysteine 18, cysteine 38, and cysteine 41.

The protein belongs to the bacterial ribosomal protein bL31 family. Type A subfamily. Part of the 50S ribosomal subunit. Zn(2+) serves as cofactor.

In terms of biological role, binds the 23S rRNA. The sequence is that of Large ribosomal subunit protein bL31 from Beutenbergia cavernae (strain ATCC BAA-8 / DSM 12333 / CCUG 43141 / JCM 11478 / NBRC 16432 / NCIMB 13614 / HKI 0122).